A 213-amino-acid chain; its full sequence is N-(5'-phosphoribosyl)anthranilate isomerase (213 aa).

The protein belongs to the TrpF family.

The enzyme catalyses N-(5-phospho-beta-D-ribosyl)anthranilate = 1-(2-carboxyphenylamino)-1-deoxy-D-ribulose 5-phosphate. It functions in the pathway amino-acid biosynthesis; L-tryptophan biosynthesis; L-tryptophan from chorismate: step 3/5. The chain is N-(5'-phosphoribosyl)anthranilate isomerase from Hahella chejuensis (strain KCTC 2396).